The sequence spans 199 residues: Fe/S biogenesis protein NfuA (199 aa).

[4Fe-4S] cluster is bound by residues Cys156 and Cys159.

Belongs to the NfuA family. In terms of assembly, homodimer. [4Fe-4S] cluster is required as a cofactor.

In terms of biological role, involved in iron-sulfur cluster biogenesis. Binds a 4Fe-4S cluster, can transfer this cluster to apoproteins, and thereby intervenes in the maturation of Fe/S proteins. Could also act as a scaffold/chaperone for damaged Fe/S proteins. This chain is Fe/S biogenesis protein NfuA, found in Actinobacillus pleuropneumoniae serotype 5b (strain L20).